A 172-amino-acid chain; its full sequence is Interferon tau-2 (172 aa).

Intrachain disulfides connect C1–C99 and C29–C139. An N-linked (GlcNAc...) asparagine glycan is attached at N78.

It belongs to the alpha/beta interferon family. IFN-alphaII subfamily. Constitutively and exclusively expressed in the mononuclear cells of the extraembryonic trophectoderm.

The protein resides in the secreted. In terms of biological role, paracrine hormone primarily responsible for maternal recognition of pregnancy. Interacts with endometrial receptors, probably type I interferon receptors, and blocks estrogen receptor expression, preventing the estrogen-induced increase in oxytocin receptor expression in the endometrium. This results in the suppression of the pulsatile endometrial release of the luteolytic hormone prostaglandin F2-alpha, hindering the regression of the corpus luteum (luteolysis) and therefore a return to ovarian cyclicity. This, and a possible direct effect of IFN-tau on prostaglandin synthesis, leads in turn to continued ovarian progesterone secretion, which stimulates the secretion by the endometrium of the nutrients required for the growth of the conceptus. In summary, displays particularly high antiviral and antiproliferative potency concurrently with particular weak cytotoxicity, high antiluteolytic activity and immunomodulatory properties. In contrast with other IFNs, IFN-tau is not virally inducible. The protein is Interferon tau-2 (IFNT2) of Bos taurus (Bovine).